The primary structure comprises 83 residues: Small ribosomal subunit protein bS16 (83 aa).

Belongs to the bacterial ribosomal protein bS16 family.

This chain is Small ribosomal subunit protein bS16, found in Ectopseudomonas mendocina (strain ymp) (Pseudomonas mendocina).